Reading from the N-terminus, the 765-residue chain is Putative U-box domain-containing protein 50 (765 aa).

Residues 198–391 (QEIENYFQQL…NRRIEFCKER (194 aa)) are a coiled coil. One can recognise a Protein kinase domain in the interval 422–765 (SDRLRLKSGG…HSKRAAQASS (344 aa)). Residues 428–436 (KSGGNWTNV) and Lys-449 contribute to the ATP site. A U-box domain is found at 688–762 (DIPSVFMCPI…QDWHSKRAAQ (75 aa)).

Belongs to the protein kinase superfamily. Ser/Thr protein kinase family.

The enzyme catalyses S-ubiquitinyl-[E2 ubiquitin-conjugating enzyme]-L-cysteine + [acceptor protein]-L-lysine = [E2 ubiquitin-conjugating enzyme]-L-cysteine + N(6)-ubiquitinyl-[acceptor protein]-L-lysine.. The protein operates within protein modification; protein ubiquitination. Its function is as follows. Functions as an E3 ubiquitin ligase. The protein is Putative U-box domain-containing protein 50 (PUB50) of Arabidopsis thaliana (Mouse-ear cress).